The chain runs to 89 residues: UPF0335 protein RPC_3979 (89 aa).

It belongs to the UPF0335 family.

The polypeptide is UPF0335 protein RPC_3979 (Rhodopseudomonas palustris (strain BisB18)).